Consider the following 303-residue polypeptide: Taste receptor type 2 member 13 (303 aa).

Over 1–7 (MESALLS) the chain is Extracellular. The chain crosses the membrane as a helical span at residues 8-28 (ILTLVIIAEFVIGNLSNGFXV). The Cytoplasmic portion of the chain corresponds to 29 to 55 (LINCIDWVSKRQLSSVDKILTFLAISR). Residues 56–76 (IGLIWELLVSWFLGLHYLAIF) traverse the membrane as a helical segment. The Extracellular portion of the chain corresponds to 77–85 (VSGTGLRIM). The chain crosses the membrane as a helical span at residues 86–106 (IFSWVVSNHFSLWLATILSIF). At 107-128 (YLLKIASFSSPAFLYLKWRVNQ) the chain is on the cytoplasmic side. The helical transmembrane segment at 129 to 149 (VILMILLGTLVFLFLNLIQIN) threads the bilayer. Residues 150–184 (IHIKDWLDRCERNTIWNFSMSGLPTFSVPVKFTMT) lie on the Extracellular side of the membrane. A glycan (N-linked (GlcNAc...) asparagine) is linked at Asn-166. A helical membrane pass occupies residues 185–205 (MFSLAPFTVALISFLLLIFSL). Over 206-232 (RKHLQKMQLNYKGHREPRTKAHINALK) the chain is Cytoplasmic. A helical transmembrane segment spans residues 233–253 (IVISFLLLYASFFLCILISWI). The Extracellular segment spans residues 254 to 261 (SELYQNTL). Residues 262–282 (IHMFCQTIGVFYPSSHSFLLI) traverse the membrane as a helical segment. Over 283–303 (LGNPKLRQASLLVAAKVWAKR) the chain is Cytoplasmic.

This sequence belongs to the G-protein coupled receptor T2R family.

Its subcellular location is the membrane. Its function is as follows. Receptor that may play a role in the perception of bitterness and is gustducin-linked. May play a role in sensing the chemical composition of the gastrointestinal content. The activity of this receptor may stimulate alpha gustducin, mediate PLC-beta-2 activation and lead to the gating of TRPM5. The polypeptide is Taste receptor type 2 member 13 (TAS2R13) (Papio hamadryas (Hamadryas baboon)).